Reading from the N-terminus, the 382-residue chain is Phenylalanine dehydrogenase (382 aa).

Arg54 is a binding site for NAD(+). Lys78 lines the L-phenylalanine pocket. Residue Lys90 is the Proton donor/acceptor of the active site. Residues Asp125, Ser156, Thr160, 190–196 (GLGKVGY), 213–214 (DI), 253–254 (AF), and 274–276 (SAN) each bind NAD(+). Asn276 provides a ligand contact to L-phenylalanine.

This sequence belongs to the Glu/Leu/Phe/Val dehydrogenases family.

It catalyses the reaction L-phenylalanine + NAD(+) + H2O = 3-phenylpyruvate + NH4(+) + NADH + H(+). With respect to regulation, activity is not affected by the metal chelating agent EDTA. Addition of 1 mM Mg(2+) results in 15% increase in activity, while the enzyme is strongly inhibited by 1 mM Fe(3+), Fe(2+), Cu(2+), Zn(2+) and Ag(+). Catalyzes the reversible NAD(+)-dependent oxidative deamination of L-phenylalanine to phenylpyruvate. Can also catalyze the oxidative deamination of several other amino acids, with much lower efficiency. Shows activity towards various bulky aromatic alpha-keto acids/esters and (S)-amine alcohols. Can catalyze the amination of 3-(2-chlorophenyl)-2-oxopropionic acid (CPOA) to produce 2-chloro-L-phenylalanine (2-Cl-Phe), a chemical compound used in the pharmaceutical and biotechnology industries. Shows a preference for amination over deamination. This is Phenylalanine dehydrogenase from Bacillus thermotolerans (Quasibacillus thermotolerans).